The following is a 39-amino-acid chain: Cytochrome b559 subunit beta (39 aa).

Residues W14–S30 traverse the membrane as a helical segment. Heme is bound at residue H18.

In terms of assembly, heterodimer of an alpha subunit and a beta subunit. PSII is composed of 1 copy each of membrane proteins PsbA, PsbB, PsbC, PsbD, PsbE, PsbF, PsbH, PsbI, PsbJ, PsbK, PsbL, PsbM, PsbT, PsbX, PsbY, PsbZ, Psb30/Ycf12, at least 3 peripheral proteins of the oxygen-evolving complex and a large number of cofactors. It forms dimeric complexes. Requires heme b as cofactor. The N-terminus is blocked.

Its subcellular location is the plastid. The protein resides in the chloroplast thylakoid membrane. In terms of biological role, this b-type cytochrome is tightly associated with the reaction center of photosystem II (PSII). PSII is a light-driven water:plastoquinone oxidoreductase that uses light energy to abstract electrons from H(2)O, generating O(2) and a proton gradient subsequently used for ATP formation. It consists of a core antenna complex that captures photons, and an electron transfer chain that converts photonic excitation into a charge separation. This chain is Cytochrome b559 subunit beta, found in Spinacia oleracea (Spinach).